The sequence spans 436 residues: Hydrolyase ccsE (436 aa).

S249 (nucleophile) is an active-site residue.

Belongs to the AB hydrolase superfamily. FUS2 hydrolase family. Homodimer.

It functions in the pathway mycotoxin biosynthesis. In terms of biological role, hydrolyase; part of the gene cluster that mediates the biosynthesis of a family of the mycotoxins cytochalasins E and K. The hybrid PKS-NRPS synthetase ccsA and the enoyl reductase ccsC are responsible for fusion of phenylalanine with an octaketide backbone and subsequent release of the stable tetramic acid precursor. The polyketide synthase module (PKS) of the PKS-NRPS ccsA is responsible for the synthesis of the octaketide backbone. The downstream nonribosomal peptide synthetase (NRPS) amidates the carboxyl end of the octaketide with a phenylalanine. A reductase-like domain (R) at the C-terminus catalyzes the reductive release of the polyketide-amino acid intermediate. Because ccsA lacks a designated enoylreductase (ER) domain, the required activity is provided the enoyl reductase ccsC. Upon formation of the 11-membered carbocycle-fused perhydroisoindolone intermediate, a number of oxidative steps are required to afford the final cytochalasin E and K, including two hydroxylations at C17 and C18, one alcohol oxidation at C17, one epoxidation at C6 and C7 and two Baeyer-Villiger oxidations. The oxidative modification at C17, C18 and the C6-C7 epoxidation are likely to be catalyzed by the two cytochrome P450 oxygenases ccsD and ccsG. CcsD may be responsible for the epoxidation of the C6-C7 double bond. CcsG may be responsible for the successive oxidative modifications at C17 and C18. The double Baeyer-Villiger oxidations of ketocytochalasin to precytochalasin and cytochalasin Z(16) are among the final steps leading to cytochalasin E and K and are catalyzed by ccsB. The first oxygen insertion step follows that of the classic BVMO mechanism, generating the ester precytochalasin. Release of precytochalasin into an aqueous environment can generate the shunt product iso-precytochalasin through spontaneous isomerization. Alternatively, precytochalasin can undergo further oxidation by ccsB to yield the in-line carbonate-containing cytochalasin Z(16). Cytochalasin Z(16) is a precursor to cytochalasin E and cytochalasin K, whereas iso-precytochalasin is a precursor to cytochalasin Z(17) and rosellichalasin. The hydrolyase ccsE may catalyze hydrolysis of epoxide bond in cytochalasin E to afford cytochalasin K. The function of ccsF has not been assigned but it may play a role in post-PKS-NRPS biosynthetic step, resistance or transport of cytochalasins and related PKS-NRPS products. The chain is Hydrolyase ccsE from Aspergillus clavatus (strain ATCC 1007 / CBS 513.65 / DSM 816 / NCTC 3887 / NRRL 1 / QM 1276 / 107).